A 172-amino-acid polypeptide reads, in one-letter code: Co-chaperone protein HscB homolog (172 aa).

Residues 2–69 form the J domain; sequence NHFELFNLPV…DSRAAYLLAL (68 aa).

The protein belongs to the HscB family. As to quaternary structure, interacts with HscA and stimulates its ATPase activity.

Its function is as follows. Co-chaperone involved in the maturation of iron-sulfur cluster-containing proteins. Seems to help targeting proteins to be folded toward HscA. This chain is Co-chaperone protein HscB homolog, found in Acinetobacter baumannii (strain SDF).